Reading from the N-terminus, the 296-residue chain is 4-hydroxybenzoate octaprenyltransferase (296 aa).

8 consecutive transmembrane segments (helical) span residues 28–48 (PIGI…AGNG), 52–72 (LANV…GCCI), 102–122 (ALAL…CTNS), 145–167 (TYYP…FTAA), 174–196 (SAWL…YAMV), 219–239 (NIIL…GSRF), 241–261 (LGGW…WEYW), and 275–295 (FLHN…DYAF).

Belongs to the UbiA prenyltransferase family. The cofactor is Mg(2+).

It is found in the cell inner membrane. It carries out the reaction all-trans-octaprenyl diphosphate + 4-hydroxybenzoate = 4-hydroxy-3-(all-trans-octaprenyl)benzoate + diphosphate. The protein operates within cofactor biosynthesis; ubiquinone biosynthesis. In terms of biological role, catalyzes the prenylation of para-hydroxybenzoate (PHB) with an all-trans polyprenyl group. Mediates the second step in the final reaction sequence of ubiquinone-8 (UQ-8) biosynthesis, which is the condensation of the polyisoprenoid side chain with PHB, generating the first membrane-bound Q intermediate 3-octaprenyl-4-hydroxybenzoate. This is 4-hydroxybenzoate octaprenyltransferase from Pseudomonas putida (strain GB-1).